The primary structure comprises 323 residues: Lipoyl synthase (323 aa).

The interval M1–E27 is disordered. The [4Fe-4S] cluster site is built by C61, C66, C72, C87, C91, C94, and S300. Positions W73–L289 constitute a Radical SAM core domain.

Belongs to the radical SAM superfamily. Lipoyl synthase family. [4Fe-4S] cluster serves as cofactor.

It localises to the cytoplasm. The catalysed reaction is [[Fe-S] cluster scaffold protein carrying a second [4Fe-4S](2+) cluster] + N(6)-octanoyl-L-lysyl-[protein] + 2 oxidized [2Fe-2S]-[ferredoxin] + 2 S-adenosyl-L-methionine + 4 H(+) = [[Fe-S] cluster scaffold protein] + N(6)-[(R)-dihydrolipoyl]-L-lysyl-[protein] + 4 Fe(3+) + 2 hydrogen sulfide + 2 5'-deoxyadenosine + 2 L-methionine + 2 reduced [2Fe-2S]-[ferredoxin]. It functions in the pathway protein modification; protein lipoylation via endogenous pathway; protein N(6)-(lipoyl)lysine from octanoyl-[acyl-carrier-protein]: step 2/2. Catalyzes the radical-mediated insertion of two sulfur atoms into the C-6 and C-8 positions of the octanoyl moiety bound to the lipoyl domains of lipoate-dependent enzymes, thereby converting the octanoylated domains into lipoylated derivatives. This is Lipoyl synthase from Agrobacterium fabrum (strain C58 / ATCC 33970) (Agrobacterium tumefaciens (strain C58)).